Consider the following 311-residue polypeptide: tRNA dimethylallyltransferase (311 aa).

ATP is bound at residue 19–26 (GPSGSGKS). 21–26 (SGSGKS) contributes to the substrate binding site. The interval 44–47 (DSLS) is interaction with substrate tRNA.

Belongs to the IPP transferase family. Monomer. The cofactor is Mg(2+).

It catalyses the reaction adenosine(37) in tRNA + dimethylallyl diphosphate = N(6)-dimethylallyladenosine(37) in tRNA + diphosphate. Catalyzes the transfer of a dimethylallyl group onto the adenine at position 37 in tRNAs that read codons beginning with uridine, leading to the formation of N6-(dimethylallyl)adenosine (i(6)A). In Helicobacter pylori (strain ATCC 700392 / 26695) (Campylobacter pylori), this protein is tRNA dimethylallyltransferase.